The chain runs to 446 residues: Keratin, type I cytoskeletal 25 (446 aa).

Residues 1 to 74 (MSLRLSSGSR…VNEGGLLSGN (74 aa)) form a head region. The tract at residues 75–110 (EKVTMQNLNDRLASYLDNVQALQEANADLEQKIKGW) is coil 1A. An IF rod domain is found at 75–390 (EKVTMQNLND…LLIGGDEGAC (316 aa)). Positions 111 to 132 (YEKFGPGSCRGLDHDYSRYFPI) are linker 1. Residues 133–224 (IDDLKNQIIT…KNHKEEMQAL (92 aa)) form a coil 1B region. The linker 12 stretch occupies residues 225–247 (QCAAGGNVNVEMNAAPGVDLTVL). The interval 248-386 (LNNMRAEYEA…ETYCLLIGGD (139 aa)) is coil 2. Residues 387–446 (EGACKSSSYKSKDYGSGNAGNQIKDPVKAIVVKKVLEEVDQRSKILTTRLHSLEEKSQSN) are tail. A Phosphoserine modification is found at Ser438.

Belongs to the intermediate filament family. In terms of assembly, heterodimer of a type I and a type II keratin. Heterodimer with type II keratin KRT5 leading to the formation of keratin intermediate filament (KIF) network. Interacts with KRT6A to form filaments.

The protein resides in the cytoplasm. In terms of biological role, essential for the proper assembly of type I and type II keratin protein complexes and formation of keratin intermediate filaments in the inner root sheath (irs). Plays a role in the cytoskeleton organization. The sequence is that of Keratin, type I cytoskeletal 25 from Mus musculus (Mouse).